We begin with the raw amino-acid sequence, 368 residues long: Isopentenyl-diphosphate delta-isomerase (368 aa).

Position 7-8 (7-8 (RK)) interacts with substrate. FMN contacts are provided by residues threonine 65, 66-68 (GMT), serine 96, and asparagine 125. Residue 96 to 98 (SQR) coordinates substrate. Position 160 (glutamine 160) interacts with substrate. Mg(2+) is bound at residue glutamate 161. Residues lysine 193, serine 218, threonine 223, 275 to 277 (GIR), and 296 to 297 (AL) contribute to the FMN site.

The protein belongs to the IPP isomerase type 2 family. Homooctamer. Dimer of tetramers. FMN serves as cofactor. It depends on NADPH as a cofactor. Mg(2+) is required as a cofactor.

The protein localises to the cytoplasm. It carries out the reaction isopentenyl diphosphate = dimethylallyl diphosphate. Its function is as follows. Involved in the biosynthesis of isoprenoids. Catalyzes the 1,3-allylic rearrangement of the homoallylic substrate isopentenyl (IPP) to its allylic isomer, dimethylallyl diphosphate (DMAPP). This is Isopentenyl-diphosphate delta-isomerase from Saccharolobus islandicus (strain M.16.27) (Sulfolobus islandicus).